Here is a 309-residue protein sequence, read N- to C-terminus: Gamma-hemolysin component A (309 aa).

Positions 1 to 29 are cleaved as a signal peptide; the sequence is MIKNKILTATLAVGLIAPLANPFIEISKA.

Belongs to the aerolysin family. Toxicity requires sequential binding and synergistic association of a class S and a class F component which form heterooligomeric complexes. HlgA (class S) associates with HlgB (class F) thus forming an AB toxin in strains producing both gamma-hemolysins and leukocidins. HlgA and LukF-PV can also form a complex.

Its subcellular location is the secreted. In terms of biological role, toxin that seems to act by forming pores in the membrane of the cell. Has a hemolytic and a leucotoxic activity. The protein is Gamma-hemolysin component A (hlgA) of Staphylococcus aureus (strain MRSA252).